The chain runs to 25 residues: Caerin-1.5 (25 aa).

Leu25 is modified (leucine amide).

As to expression, expressed by the skin parotoid and/or rostral glands.

The protein resides in the secreted. Functionally, antibacterial peptide, that adopts an alpha helical conformation which can disrupt bacterial membranes. Each caerin displays a different antimicrobial specificity. This is Caerin-1.5 from Ranoidea caerulea (Green tree frog).